The chain runs to 214 residues: Probable transaldolase (214 aa).

Lysine 83 acts as the Schiff-base intermediate with substrate in catalysis.

The protein belongs to the transaldolase family. Type 3B subfamily.

Its subcellular location is the cytoplasm. The catalysed reaction is D-sedoheptulose 7-phosphate + D-glyceraldehyde 3-phosphate = D-erythrose 4-phosphate + beta-D-fructose 6-phosphate. The protein operates within carbohydrate degradation; pentose phosphate pathway; D-glyceraldehyde 3-phosphate and beta-D-fructose 6-phosphate from D-ribose 5-phosphate and D-xylulose 5-phosphate (non-oxidative stage): step 2/3. Transaldolase is important for the balance of metabolites in the pentose-phosphate pathway. This Desulfotalea psychrophila (strain LSv54 / DSM 12343) protein is Probable transaldolase.